A 426-amino-acid polypeptide reads, in one-letter code: Glutamate-1-semialdehyde 2,1-aminomutase (426 aa).

Lys265 bears the N6-(pyridoxal phosphate)lysine mark.

Belongs to the class-III pyridoxal-phosphate-dependent aminotransferase family. HemL subfamily. As to quaternary structure, homodimer. It depends on pyridoxal 5'-phosphate as a cofactor.

It localises to the cytoplasm. It carries out the reaction (S)-4-amino-5-oxopentanoate = 5-aminolevulinate. It functions in the pathway porphyrin-containing compound metabolism; protoporphyrin-IX biosynthesis; 5-aminolevulinate from L-glutamyl-tRNA(Glu): step 2/2. This is Glutamate-1-semialdehyde 2,1-aminomutase from Escherichia coli O9:H4 (strain HS).